A 749-amino-acid polypeptide reads, in one-letter code: Ribosome-releasing factor 2, mitochondrial (749 aa).

The transit peptide at 1 to 22 (MLLLLCNRSVVPRGIRRILRTA) directs the protein to the mitochondrion. The region spanning 44–322 (KNIRNIGILA…AVLKYLPAPN (279 aa)) is the tr-type G domain. GTP contacts are provided by residues 53-60 (AHIDGGKT), 117-121 (DTPGH), and 171-174 (NKMD).

Belongs to the TRAFAC class translation factor GTPase superfamily. Classic translation factor GTPase family. EF-G/EF-2 subfamily.

Its subcellular location is the mitochondrion. Its function is as follows. Mitochondrial GTPase that mediates the disassembly of ribosomes from messenger RNA at the termination of mitochondrial protein biosynthesis. Not involved in the GTP-dependent ribosomal translocation step during translation elongation. The chain is Ribosome-releasing factor 2, mitochondrial from Culex quinquefasciatus (Southern house mosquito).